The primary structure comprises 328 residues: D-cysteine desulfhydrase (328 aa).

An N6-(pyridoxal phosphate)lysine modification is found at Lys-51.

Belongs to the ACC deaminase/D-cysteine desulfhydrase family. As to quaternary structure, homodimer. Pyridoxal 5'-phosphate is required as a cofactor.

It catalyses the reaction D-cysteine + H2O = hydrogen sulfide + pyruvate + NH4(+) + H(+). Functionally, catalyzes the alpha,beta-elimination reaction of D-cysteine and of several D-cysteine derivatives. It could be a defense mechanism against D-cysteine. The polypeptide is D-cysteine desulfhydrase (Klebsiella pneumoniae subsp. pneumoniae (strain ATCC 700721 / MGH 78578)).